Consider the following 272-residue polypeptide: Phosphoribosylformylglycinamidine synthase subunit PurQ (272 aa).

The region spanning Val-8 to Lys-272 is the Glutamine amidotransferase type-1 domain. The Nucleophile role is filled by Cys-98. Catalysis depends on residues His-225, Glu-227, and Glu-235.

As to quaternary structure, part of the FGAM synthase complex composed of 1 PurL, 1 PurQ and 2 PurS subunits.

The protein resides in the cytoplasm. It catalyses the reaction N(2)-formyl-N(1)-(5-phospho-beta-D-ribosyl)glycinamide + L-glutamine + ATP + H2O = 2-formamido-N(1)-(5-O-phospho-beta-D-ribosyl)acetamidine + L-glutamate + ADP + phosphate + H(+). The catalysed reaction is L-glutamine + H2O = L-glutamate + NH4(+). It participates in purine metabolism; IMP biosynthesis via de novo pathway; 5-amino-1-(5-phospho-D-ribosyl)imidazole from N(2)-formyl-N(1)-(5-phospho-D-ribosyl)glycinamide: step 1/2. In terms of biological role, part of the phosphoribosylformylglycinamidine synthase complex involved in the purines biosynthetic pathway. Catalyzes the ATP-dependent conversion of formylglycinamide ribonucleotide (FGAR) and glutamine to yield formylglycinamidine ribonucleotide (FGAM) and glutamate. The FGAM synthase complex is composed of three subunits. PurQ produces an ammonia molecule by converting glutamine to glutamate. PurL transfers the ammonia molecule to FGAR to form FGAM in an ATP-dependent manner. PurS interacts with PurQ and PurL and is thought to assist in the transfer of the ammonia molecule from PurQ to PurL. The polypeptide is Phosphoribosylformylglycinamidine synthase subunit PurQ (Methanococcus maripaludis (strain DSM 14266 / JCM 13030 / NBRC 101832 / S2 / LL)).